Consider the following 664-residue polypeptide: Macoilin (664 aa).

4 helical membrane passes run 28–48, 75–95, 120–140, and 154–174; these read TFLY…DFVL, AFSV…LLFI, VCLP…AIRF, and FAAH…KSYV. A compositionally biased stretch (basic and acidic residues) spans 252 to 265; that stretch reads YREKGKEKDKDAKK. The tract at residues 252-274 is disordered; it reads YREKGKEKDKDAKKHNLGINNNN. At Ser-305 the chain carries Phosphoserine. A compositionally biased stretch (polar residues) spans 320–348; the sequence is KNYKNASGVVNSSPRSHSATNGSIPSSSS. A disordered region spans residues 320-375; that stretch reads KNYKNASGVVNSSPRSHSATNGSIPSSSSKNEKKQRCTSKGPSAHKDLMENCIPNN. Asn-324 is a glycosylation site (N-linked (GlcNAc...) asparagine). Ser-332 is modified (phosphoserine). Residues Asn-340 and Asn-452 are each glycosylated (N-linked (GlcNAc...) asparagine). A disordered region spans residues 630–664; that stretch reads TSPLSPVSPHYSSKFVETSPSGLDPNASVYQPLKK. 2 positions are modified to phosphoserine: Ser-631 and Ser-634. Asn-655 carries N-linked (GlcNAc...) asparagine glycosylation.

The protein belongs to the macoilin family.

Its subcellular location is the rough endoplasmic reticulum membrane. The protein resides in the nucleus membrane. Plays a role in the regulation of neuronal activity. This is Macoilin from Rattus norvegicus (Rat).